The following is a 130-amino-acid chain: Phosphoribosyl-AMP cyclohydrolase (130 aa).

A Mg(2+)-binding site is contributed by aspartate 77. Cysteine 78 serves as a coordination point for Zn(2+). The Mg(2+) site is built by aspartate 79 and aspartate 81. Zn(2+) contacts are provided by cysteine 95 and cysteine 102.

This sequence belongs to the PRA-CH family. Homodimer. It depends on Mg(2+) as a cofactor. Zn(2+) is required as a cofactor.

Its subcellular location is the cytoplasm. It catalyses the reaction 1-(5-phospho-beta-D-ribosyl)-5'-AMP + H2O = 1-(5-phospho-beta-D-ribosyl)-5-[(5-phospho-beta-D-ribosylamino)methylideneamino]imidazole-4-carboxamide. The protein operates within amino-acid biosynthesis; L-histidine biosynthesis; L-histidine from 5-phospho-alpha-D-ribose 1-diphosphate: step 3/9. Its function is as follows. Catalyzes the hydrolysis of the adenine ring of phosphoribosyl-AMP. The chain is Phosphoribosyl-AMP cyclohydrolase from Pseudomonas entomophila (strain L48).